The chain runs to 1210 residues: Epidermal growth factor receptor (1210 aa).

The signal sequence occupies residues 1-24; that stretch reads MRPSGTAGAALLALLAALCPASRA. Over 25–645 the chain is Extracellular; the sequence is LEEKKVCQGT…CPTNGPKIPS (621 aa). A disulfide bond links Cys-31 and Cys-58. Residue Asn-56 is glycosylated (N-linked (GlcNAc...) (complex) asparagine; atypical; partial). Asn-73 carries an N-linked (GlcNAc...) asparagine; atypical glycan. An Approximate repeat occupies 75–300; it reads DLSFLKTIQE…CVKKCPRNYV (226 aa). N-linked (GlcNAc...) asparagine glycans are attached at residues Asn-128, Asn-175, and Asn-196. 13 disulfide bridges follow: Cys-157–Cys-187, Cys-190–Cys-199, Cys-194–Cys-207, Cys-215–Cys-223, Cys-219–Cys-231, Cys-232–Cys-240, Cys-236–Cys-248, Cys-251–Cys-260, Cys-264–Cys-291, Cys-295–Cys-307, Cys-311–Cys-326, Cys-329–Cys-333, and Cys-337–Cys-362. Position 229 is a phosphoserine (Ser-229). N-linked (GlcNAc...) asparagine glycosylation is found at Asn-352, Asn-361, Asn-413, and Asn-444. The Approximate repeat unit spans residues 390–600; sequence QELDILKTVK…CVKTCPAGVM (211 aa). 11 cysteine pairs are disulfide-bonded: Cys-470–Cys-499, Cys-506–Cys-515, Cys-510–Cys-523, Cys-526–Cys-535, Cys-539–Cys-555, Cys-558–Cys-571, Cys-562–Cys-579, Cys-582–Cys-591, Cys-595–Cys-617, Cys-620–Cys-628, and Cys-624–Cys-636. N-linked (GlcNAc...) asparagine glycosylation occurs at Asn-528. Asn-568 is a glycosylation site (N-linked (GlcNAc...) asparagine; partial). Asn-603 is a glycosylation site (N-linked (GlcNAc...) asparagine; partial). Asn-623 carries N-linked (GlcNAc...) (high mannose) asparagine glycosylation. The helical transmembrane segment at 646–668 threads the bilayer; sequence IATGMVGALLLLLVVALGIGLFM. Over 669 to 1210 the chain is Cytoplasmic; it reads RRRHIVRKRT…APQSSEFIGA (542 aa). A Phosphothreonine; by PKC and PKD/PRKD1 modification is found at Thr-678. The tract at residues 688 to 704 is important for dimerization, phosphorylation and activation; the sequence is LVEPLTPSGEAPNQALL. A Phosphothreonine; by PKD/PRKD1 modification is found at Thr-693. Residue Ser-695 is modified to Phosphoserine. In terms of domain architecture, Protein kinase spans 712–979; the sequence is FKKIKVLGSG…KMARDPQRYL (268 aa). Lys-716 is covalently cross-linked (Glycyl lysine isopeptide (Lys-Gly) (interchain with G-Cter in ubiquitin)). 718-726 lines the ATP pocket; that stretch reads LGSGAFGTV. Lys-737 participates in a covalent cross-link: Glycyl lysine isopeptide (Lys-Gly) (interchain with G-Cter in ubiquitin). Lys-745 contributes to the ATP binding site. Position 745 is an N6-(2-hydroxyisobutyryl)lysine (Lys-745). Glycyl lysine isopeptide (Lys-Gly) (interchain with G-Cter in ubiquitin) cross-links involve residues Lys-754 and Lys-757. 790–791 lines the ATP pocket; sequence TQ. Asp-837 serves as the catalytic Proton acceptor. Asp-855 is a binding site for ATP. A Glycyl lysine isopeptide (Lys-Gly) (interchain with G-Cter in ubiquitin) cross-link involves residue Lys-867. Phosphotyrosine is present on Tyr-869. Residues Lys-929, Lys-960, and Lys-970 each participate in a glycyl lysine isopeptide (Lys-Gly) (interchain with G-Cter in ubiquitin) cross-link. Ser-991 and Ser-995 each carry phosphoserine. Phosphotyrosine; by autocatalysis occurs at positions 998 and 1016. Residues Ser-1026 and Ser-1039 each carry the phosphoserine modification. Residue Thr-1041 is modified to Phosphothreonine. Ser-1042 bears the Phosphoserine mark. A lipid anchor (S-palmitoyl cysteine) is attached at Cys-1049. Ser-1064 is modified (phosphoserine). Residue Tyr-1069 is modified to Phosphotyrosine. Residues Ser-1070, Ser-1071, and Ser-1081 each carry the phosphoserine modification. A phosphotyrosine; by autocatalysis mark is found at Tyr-1092 and Tyr-1110. A disordered region spans residues 1097 to 1137; the sequence is VPKRPAGSVQNPVYHNQPLNPAPSRDPHYQDPHSTAVGNPE. Composition is skewed to polar residues over residues 1104–1115 and 1128–1137; these read SVQNPVYHNQPL and PHSTAVGNPE. The S-palmitoyl cysteine moiety is linked to residue Cys-1146. The residue at position 1166 (Ser-1166) is a Phosphoserine. Residues Tyr-1172 and Tyr-1197 each carry the phosphotyrosine; by autocatalysis modification. Arg-1199 is subject to Omega-N-methylarginine.

Belongs to the protein kinase superfamily. Tyr protein kinase family. EGF receptor subfamily. In terms of assembly, binding of the ligand triggers homo- and/or heterodimerization of the receptor triggering its autophosphorylation. Heterodimer with ERBB2. Forms a complex with CCDC88A/GIV (via SH2-like regions) and GNAI3 which leads to enhanced EGFR signaling and triggering of cell migration; binding to CCDC88A requires autophosphorylation of the EGFR C-terminal region, and ligand stimulation is required for recruitment of GNAI3 to the complex. Interacts with ERRFI1; inhibits dimerization of the kinase domain and autophosphorylation. Part of a complex with ERBB2 and either PIK3C2A or PIK3C2B. Interacts with GRB2; an adapter protein coupling the receptor to downstream signaling pathways. Interacts with GAB2; involved in signaling downstream of EGFR. Interacts with STAT3; mediates EGFR downstream signaling in cell proliferation. Interacts with RIPK1; involved in NF-kappa-B activation. Interacts (autophosphorylated) with CBL, CBLB and CBLC; involved in EGFR ubiquitination and regulation; interaction with CBL is reduced in the presence of tensin TNS4. Interacts with SOCS5; regulates EGFR degradation through ELOC- and ELOB-mediated ubiquitination and proteasomal degradation. Interacts with PRMT5; methylates EGFR and enhances interaction with PTPN6. Interacts (phosphorylated) with PTPN6; inhibits EGFR-dependent activation of MAPK/ERK. Interacts with COPG1; essential for regulation of EGF-dependent nuclear transport of EGFR by retrograde trafficking from the Golgi to the ER. Interacts with TNK2; this interaction is dependent on EGF stimulation and kinase activity of EGFR. Interacts with PCNA; positively regulates PCNA. Interacts with PELP1. Interacts with MUC1. Interacts with AP2M1. Interacts with FER. May interact with EPS8; mediates EPS8 phosphorylation. Interacts (via SH2 domains) with GRB2, NCK1 and NCK2. Interacts with ATXN2. Interacts with GAREM1. Interacts (ubiquitinated) with ANKRD13A/B/D; the interaction is direct and may regulate EGFR internalization after EGF stimulation. Interacts with GPER1; the interaction occurs in an estrogen-dependent manner. Interacts (via C-terminal cytoplasmic kinase domain) with ZPR1 (via zinc fingers). Interacts with RNF115 and RNF126. Interacts with GPRC5A (via its transmembrane domain). Interacts with FAM83B; positively regulates EGFR inducing its autophosphorylation in absence of stimulation by EGF. Interacts with LAPTM4B; positively correlates with EGFR activation. Interacts with STX19. Interacts with CD44. Interacts with PGRMC1; the interaction requires PGRMC1 homodimerization. Interacts with PIKFYVE. Interacts with NEU3. Interacts with TRAF4. Interacts with the ant venom OMEGA-myrmeciitoxin(02)-Mg1a. Interacts with CD82; this interaction facilitates ligand-induced endocytosis of the receptor and its subsequent desensitization. Phosphorylated on Tyr residues in response to EGF. Phosphorylation at Ser-695 is partial and occurs only if Thr-693 is phosphorylated. Phosphorylation at Thr-678 and Thr-693 by PRKD1 inhibits EGF-induced MAPK8/JNK1 activation. Dephosphorylation by PTPRJ prevents endocytosis and stabilizes the receptor at the plasma membrane. Autophosphorylation at Tyr-1197 is stimulated by methylation at Arg-1199 and enhances interaction with PTPN6. Autophosphorylation at Tyr-1092 and/or Tyr-1110 recruits STAT3. Dephosphorylated by PTPN1 and PTPN2. In terms of processing, monoubiquitinated and polyubiquitinated upon EGF stimulation; which does not affect tyrosine kinase activity or signaling capacity but may play a role in lysosomal targeting. Polyubiquitin linkage is mainly through 'Lys-63', but linkage through 'Lys-48', 'Lys-11' and 'Lys-29' also occurs. Deubiquitination by OTUD7B prevents degradation. Ubiquitinated by RNF115 and RNF126. Ubiquitinated by ZNRF1 or CBL at different lysines in response to EGF stimulation; leading to recruitment of the ESCRT machinery and subsequent degradation in the lysosomes. Deubiquitinated by UCHL1 leading to the inhibition of its degradation. Post-translationally, palmitoylated on Cys residues by ZDHHC20. Palmitoylation inhibits internalization after ligand binding, and increases the persistence of tyrosine-phosphorylated EGFR at the cell membrane. Palmitoylation increases the amplitude and duration of EGFR signaling. Methylated. Methylation at Arg-1199 by PRMT5 stimulates phosphorylation at Tyr-1197. In terms of tissue distribution, ubiquitously expressed. Isoform 2 is also expressed in ovarian cancers.

It localises to the cell membrane. It is found in the endoplasmic reticulum membrane. The protein localises to the golgi apparatus membrane. The protein resides in the nucleus membrane. Its subcellular location is the endosome. It localises to the endosome membrane. It is found in the nucleus. The protein localises to the secreted. It carries out the reaction L-tyrosyl-[protein] + ATP = O-phospho-L-tyrosyl-[protein] + ADP + H(+). With respect to regulation, endocytosis and inhibition of the activated EGFR by phosphatases like PTPRJ and PTPRK constitute immediate regulatory mechanisms. Upon EGF-binding phosphorylates EPS15 that regulates EGFR endocytosis and activity. Moreover, inducible feedback inhibitors including LRIG1, SOCS4, SOCS5 and ERRFI1 constitute alternative regulatory mechanisms for the EGFR signaling. Up-regulated by NEU3-mediated desialylation of N-linked glycan at Asn-528. Receptor tyrosine kinase binding ligands of the EGF family and activating several signaling cascades to convert extracellular cues into appropriate cellular responses. Known ligands include EGF, TGFA/TGF-alpha, AREG, epigen/EPGN, BTC/betacellulin, epiregulin/EREG and HBEGF/heparin-binding EGF. Ligand binding triggers receptor homo- and/or heterodimerization and autophosphorylation on key cytoplasmic residues. The phosphorylated receptor recruits adapter proteins like GRB2 which in turn activates complex downstream signaling cascades. Activates at least 4 major downstream signaling cascades including the RAS-RAF-MEK-ERK, PI3 kinase-AKT, PLCgamma-PKC and STATs modules. May also activate the NF-kappa-B signaling cascade. Also directly phosphorylates other proteins like RGS16, activating its GTPase activity and probably coupling the EGF receptor signaling to the G protein-coupled receptor signaling. Also phosphorylates MUC1 and increases its interaction with SRC and CTNNB1/beta-catenin. Positively regulates cell migration via interaction with CCDC88A/GIV which retains EGFR at the cell membrane following ligand stimulation, promoting EGFR signaling which triggers cell migration. Plays a role in enhancing learning and memory performance. Plays a role in mammalian pain signaling (long-lasting hypersensitivity). Functionally, isoform 2 may act as an antagonist of EGF action. In terms of biological role, (Microbial infection) Acts as a receptor for hepatitis C virus (HCV) in hepatocytes and facilitates its cell entry. Mediates HCV entry by promoting the formation of the CD81-CLDN1 receptor complexes that are essential for HCV entry and by enhancing membrane fusion of cells expressing HCV envelope glycoproteins. The protein is Epidermal growth factor receptor of Homo sapiens (Human).